Here is a 243-residue protein sequence, read N- to C-terminus: Putative ABC transporter arginine-binding protein 2 (243 aa).

An N-terminal signal peptide occupies residues 1 to 19; the sequence is MKKVLIAALIAGFSLSATA.

Belongs to the bacterial solute-binding protein 3 family. As to quaternary structure, the complex is composed of two ATP-binding proteins (ArtP), two transmembrane proteins (ArtM and ArtQ) and two solute-binding proteins (ArtJ and ArtI).

Its subcellular location is the periplasm. In terms of biological role, part of the ABC transporter complex ArtPIQMJ involved in arginine transport. The polypeptide is Putative ABC transporter arginine-binding protein 2 (artI) (Escherichia coli (strain K12)).